The primary structure comprises 260 residues: Ava biosynthesis cluster protein M (260 aa).

The first 15 residues, 1 to 15 (MKVLVLGLCRTGTSS), serve as a signal peptide directing secretion.

Belongs to the cytochrome P450 family.

Its pathway is secondary metabolite biosynthesis. Its function is as follows. Part of the cluster that mediates the biosynthesis of a highly modified cyclo-arginine-tryptophan dipeptide (cRW). The first step of the pathway is perfornmed by the arginine-containing cyclodipeptide synthase (RCPDS) avaA that acts as the scaffold-generating enzyme and is responsible for formation of the cyclo-Arg-Trp (cRW) diketopiperazine. AvaB then acts as a multifunctional flavoenzyme that is responsible for generating the cyclo-Arg-formylkynurenine DKP, which can be deformylated by avaC. AvaB then further catalyzes an additional N-oxidation followed by cyclization and dehydration. The next step is an N-acetylation of the guanidine group catalyzed by the arginine N-acetyltransferase avaD. The roles of the additional enzymes identified within the ava cluster still have to be determined. The protein is Ava biosynthesis cluster protein M of Aspergillus versicolor.